Reading from the N-terminus, the 355-residue chain is Cyclic nucleotide-gated potassium channel mll3241 (355 aa).

Residues 1-12 (MSVLPFLRIYAP) are Cytoplasmic-facing. The helical transmembrane segment at 13 to 30 (LNAVLAAPGLLAVAALTI) threads the bilayer. Residues 31-38 (PDMSGRSR) lie on the Periplasmic side of the membrane. The chain crosses the membrane as a helical span at residues 39–61 (LALAALLAVIWGAYLLQLAATLL). Topologically, residues 62–74 (KRRAGVVRDRTPK) are cytoplasmic. Residues 75–94 (IAIDVLAVLVPLAAFLLDGS) form a helical membrane-spanning segment. A helical membrane pass occupies residues 95-112 (PDWSLYCAVWLLKPLRDS). At 113 to 129 (TFFPVLGRVLANEARNL) the chain is on the cytoplasmic side. A helical membrane pass occupies residues 130–150 (IGVTTLFGVVLFAVALAAYVI). Residues 151 to 161 (ERDIQPEKFGS) lie on the Periplasmic side of the membrane. Positions 162–180 (IPQAMWWAVVTLSTTGYGD) form an intramembrane region, pore-forming. Residues 175–180 (TTGYGD) carry the Selectivity filter motif. Topologically, residues 181 to 185 (TIPQS) are periplasmic. Residues 186–210 (FAGRVLAGAVMMSGIGIFGLWAGIL) form a helical membrane-spanning segment. Topologically, residues 211–355 (ATGFYQEVRR…LERRGAAASA (145 aa)) are cytoplasmic. Residues 297 to 298 (GE), 307 to 308 (RS), and arginine 348 contribute to the 3',5'-cyclic AMP site.

Belongs to the potassium channel family. Homotetramer.

It localises to the cell membrane. Cyclic nucleotide-regulated potassium channel activated by cAMP. The polypeptide is Cyclic nucleotide-gated potassium channel mll3241 (Mesorhizobium japonicum (strain LMG 29417 / CECT 9101 / MAFF 303099) (Mesorhizobium loti (strain MAFF 303099))).